Consider the following 590-residue polypeptide: Pentatricopeptide repeat-containing protein At2g46050, mitochondrial (590 aa).

Residues 1–109 (MRFTFLRSTR…RNIVTWNILI (109 aa)) constitute a mitochondrion transit peptide. PPR repeat units follow at residues 141 to 175 (DHVS…GLES), 176 to 206 (SCFP…VLDR), 207 to 241 (DLVL…KNRF), 244 to 266 (DYFT…IHAI), 275 to 305 (DIPV…MVVR), 306 to 340 (NVVS…NLQP), 341 to 375 (DELT…GSAD), 376 to 406 (FLSV…IREP), 407 to 437 (DLVS…MLQK), 441 to 471 (DKIT…MTEF), and 477 to 507 (EDEH…MPTE). The interval 512-588 (ALAAFTGGCN…TPGCSWLGDY (77 aa)) is type E motif.

The protein belongs to the PPR family. PCMP-E subfamily.

The protein resides in the mitochondrion. This chain is Pentatricopeptide repeat-containing protein At2g46050, mitochondrial (PCMP-E39), found in Arabidopsis thaliana (Mouse-ear cress).